We begin with the raw amino-acid sequence, 327 residues long: MCHQKLTISWFAMVLLVSPLMAIWELEKDVYVVEVDWSPGAPGERVVLTCDTSEEDDIIWTSDQSSEVVGSGKTLIVQVKEFSDAGQYTCHKGGETLSHSRLLLHKKEDGIWSTDILKDQKDPKNKTFLKCEAANYSGRFTCWWLTAVSTDLKFSLKSSSSSSDSRSVTCGAASLSTEKVTVDQRDYNKYSVACQEDITCPTAEETLPIELVMEAQHKYKYENYSTGFFIRDIIKPDPPKNLQLKPLKSSQVEVSWEYPDSWSTPHSYFSLKFFVQVYRKKEKKGESLLVDKPSAKIRCSKGGEVRVRAQDHYYNSSWSEWASVSCN.

Residues 1–22 (MCHQKLTISWFAMVLLVSPLMA) form the signal peptide. In terms of domain architecture, Ig-like C2-type spans 23–106 (IWELEKDVYV…LSHSRLLLHK (84 aa)). The cysteines at positions 50 and 90 are disulfide-linked. N-linked (GlcNAc...) asparagine glycosylation is found at Asn-125, Asn-135, Asn-223, and Asn-315. One can recognise a Fibronectin type-III domain in the interval 238–327 (PPKNLQLKPL…WSEWASVSCN (90 aa)).

This sequence belongs to the IL-12B family. In terms of assembly, heterodimer with IL12A; disulfide-linked. The heterodimer is known as interleukin IL-12. Heterodimer with IL23A; disulfide-linked. The heterodimer is known as interleukin IL-23. Also secreted as a monomer. Interacts with NBR1; this interaction promotes IL-12 secretion.

It localises to the secreted. Functionally, cytokine that can act as a growth factor for activated T and NK cells, enhance the lytic activity of NK/lymphokine-activated killer cells, and stimulate the production of IFN-gamma by resting PBMC. In terms of biological role, associates with IL23A to form the IL-23 interleukin, a heterodimeric cytokine which functions in innate and adaptive immunity. IL-23 may constitute with IL-17 an acute response to infection in peripheral tissues. IL-23 binds to a heterodimeric receptor complex composed of IL12RB1 and IL23R, activates the Jak-Stat signaling cascade, stimulates memory rather than naive T-cells and promotes production of pro-inflammatory cytokines. IL-23 induces autoimmune inflammation and thus may be responsible for autoimmune inflammatory diseases and may be important for tumorigenesis. The protein is Interleukin-12 subunit beta (IL12B) of Sigmodon hispidus (Hispid cotton rat).